We begin with the raw amino-acid sequence, 1268 residues long: Truncated polyprotein 1aTF (1268 aa).

The segment at 8–28 (CMCTPAARVFWNAGQVFCTRC) adopts a C4-type; atypical zinc-finger fold. One can recognise a Peptidase C31 domain in the interval 69 to 180 (ECTPSGCCWL…QPFCPFEEAH (112 aa)). The segment at 69 to 182 (ECTPSGCCWL…FCPFEEAHSD (114 aa)) is PCP1-alpha. Catalysis depends on for Nsp1-alpha papain-like cysteine proteinase activity residues Cys76 and His146. The interval 269 to 384 (PNVFDGKCWL…IFRFGAHKWY (116 aa)) is PCP1-beta. In terms of domain architecture, Peptidase C32 spans 269 to 385 (PNVFDGKCWL…FRFGAHKWYG (117 aa)). Active-site for Nsp1-beta papain-like cysteine proteinase activity residues include Cys276 and His345. The Peptidase C33 domain maps to 420-527 (TYSPPTDGSC…VGVCSEGCVA (108 aa)). Catalysis depends on for Nsp2 cysteine proteinase activity residues Cys429 and His498. Disordered regions lie at residues 728–758 (AIGSAQSSSDSKRENMHNSREDEPLDLSHPA) and 1027–1064 (SVTPPPKSAGLVLDQTVPPPTDIQQEDATPSDGLSHAS). Basic and acidic residues predominate over residues 737–749 (DSKRENMHNSRED). Transmembrane regions (helical) follow at residues 1119–1139 (LWLQAIGCLQVLFYLLSCSVV), 1153–1173 (FLVLCGVFVWVFLVLGWLLLY), 1194–1214 (VMLSFWLLSSANFGNLCAALW), and 1233–1253 (VISGMLSYVYACLQIWPFLLF).

Its subcellular location is the host nucleus. It is found in the host cytoplasm. The protein localises to the host endoplasmic reticulum membrane. The protein resides in the membrane. Functionally, is essential for viral subgenomic mRNA synthesis. Its function is as follows. Inhibits IFN-beta production. Counteracts the action of NF-kappaB by decreasing the phosphorylation of IkappaB-alpha, such that the degradation of IkappaB-alpha is suppressed. This leads to the blockage of NF-kappaB nuclear translocation and thus interference of NF-kappaB activation. Also seems to inhibit IRF3-dependent pathways. Nsp1-beta transactivates the programmed ribosomal frameshifting event leading to the expression of the 1aTF polyprotein. The sequence is that of Truncated polyprotein 1aTF from Porcine reproductive and respiratory syndrome virus (isolate Pig/United States/SD 01-08/2001) (PRRSV).